The sequence spans 452 residues: tRNA-2-methylthio-N(6)-dimethylallyladenosine synthase (452 aa).

In terms of domain architecture, MTTase N-terminal spans 5–121; that stretch reads RRYHITTFGC…LADLLAQVEA (117 aa). Residues cysteine 14, cysteine 50, cysteine 84, cysteine 156, cysteine 160, and cysteine 163 each coordinate [4Fe-4S] cluster. Residues 142–379 form the Radical SAM core domain; that stretch reads RDSTITAWVN…NHLVAQMAAD (238 aa). The TRAM domain maps to 382–446; it reads QRYLGRTEEV…AFSLTGQILS (65 aa).

The protein belongs to the methylthiotransferase family. MiaB subfamily. Monomer. It depends on [4Fe-4S] cluster as a cofactor.

It is found in the cytoplasm. The enzyme catalyses N(6)-dimethylallyladenosine(37) in tRNA + (sulfur carrier)-SH + AH2 + 2 S-adenosyl-L-methionine = 2-methylsulfanyl-N(6)-dimethylallyladenosine(37) in tRNA + (sulfur carrier)-H + 5'-deoxyadenosine + L-methionine + A + S-adenosyl-L-homocysteine + 2 H(+). In terms of biological role, catalyzes the methylthiolation of N6-(dimethylallyl)adenosine (i(6)A), leading to the formation of 2-methylthio-N6-(dimethylallyl)adenosine (ms(2)i(6)A) at position 37 in tRNAs that read codons beginning with uridine. This chain is tRNA-2-methylthio-N(6)-dimethylallyladenosine synthase, found in Synechococcus elongatus (strain ATCC 33912 / PCC 7942 / FACHB-805) (Anacystis nidulans R2).